A 125-amino-acid chain; its full sequence is Kappa-casein (125 aa).

The disordered stretch occupies residues 42–63; sequence LPNIDPPTVERRPRPRPSFIAI. Threonine 97 is a glycosylation site (O-linked (GalNAc...) threonine). Serine 104 is subject to Phosphoserine; alternate. O-linked (GalNAc...) serine; alternate glycosylation is present at serine 104. Threonine 121 carries an O-linked (GalNAc...) threonine glycan. Serine 122 carries the post-translational modification Phosphoserine.

The protein belongs to the kappa-casein family. As to expression, mammary gland specific. Secreted in milk.

It is found in the secreted. Its function is as follows. Kappa-casein stabilizes micelle formation, preventing casein precipitation in milk. In Lama guanicoe (Guanaco), this protein is Kappa-casein (CSN3).